Consider the following 253-residue polypeptide: uncharacterized protein (253 aa).

Residues 1–19 form the signal peptide; it reads MRYLKRITIYISLLILVSG. C20 carries the N-palmitoyl cysteine lipid modification. The S-diacylglycerol cysteine moiety is linked to residue C20.

The protein belongs to the staphylococcal tandem lipoprotein family.

It is found in the cell membrane. This is an uncharacterized protein from Staphylococcus epidermidis (strain ATCC 12228 / FDA PCI 1200).